The chain runs to 165 residues: Endoribonuclease YbeY (165 aa).

Zn(2+) contacts are provided by histidine 130, histidine 134, and histidine 140.

It belongs to the endoribonuclease YbeY family. The cofactor is Zn(2+).

The protein localises to the cytoplasm. In terms of biological role, single strand-specific metallo-endoribonuclease involved in late-stage 70S ribosome quality control and in maturation of the 3' terminus of the 16S rRNA. This is Endoribonuclease YbeY from Streptococcus suis (strain 98HAH33).